Consider the following 234-residue polypeptide: DEAD-box ATP-dependent RNA helicase 3 (234 aa).

The Q motif motif lies at 120–148 (LAVSRLGLPQKLVETLEKRGITKLFPIQR). Residues 151 to 234 (LVPALEGRDI…RTVCVYGGVS (84 aa)) enclose the Helicase ATP-binding domain. 164–171 (AKTGTGKT) is a binding site for ATP.

This sequence belongs to the DEAD box helicase family. DDX21/DDX50 subfamily.

This Helianthus annuus (Common sunflower) protein is DEAD-box ATP-dependent RNA helicase 3.